Consider the following 121-residue polypeptide: Colipase-like protein 1 (121 aa).

Positions 1-23 (MMLPQWLLLLFLLFFFLFLLTRG) are cleaved as a signal peptide. 5 disulfides stabilise this stretch: Cys-39–Cys-50, Cys-45–Cys-61, Cys-49–Cys-83, Cys-71–Cys-91, and Cys-85–Cys-107.

It belongs to the colipase family. In terms of tissue distribution, exclusively expressed in epididymis, in the corpus region.

The protein resides in the secreted. In Homo sapiens (Human), this protein is Colipase-like protein 1 (CLPSL1).